The sequence spans 394 residues: Fructose-bisphosphate aldolase, chloroplastic (394 aa).

Residues 1 to 46 constitute a chloroplast transit peptide; the sequence is MASASLLKTSPVLDNPEFLKGQTLRIPSVAGVRFTPSGSSSLTVRA. Substrate-binding residues include Arg93 and Lys183. Catalysis depends on Glu223, which acts as the Proton acceptor. Residue Lys265 is the Schiff-base intermediate with dihydroxyacetone-P of the active site.

This sequence belongs to the class I fructose-bisphosphate aldolase family.

The protein resides in the plastid. It is found in the chloroplast. It carries out the reaction beta-D-fructose 1,6-bisphosphate = D-glyceraldehyde 3-phosphate + dihydroxyacetone phosphate. Its pathway is carbohydrate degradation; glycolysis; D-glyceraldehyde 3-phosphate and glycerone phosphate from D-glucose: step 4/4. The protein is Fructose-bisphosphate aldolase, chloroplastic of Spinacia oleracea (Spinach).